Reading from the N-terminus, the 200-residue chain is ATP synthase subunit b 2 (200 aa).

Residues 1-16 show a composition bias toward polar residues; the sequence is MAEQNILTTPSPNADT. The interval 1-38 is disordered; it reads MAEQNILTTPSPNADTTIVPPGSPHTHTEQPSGGHGGA. The helical transmembrane segment at 46–66 threads the bilayer; the sequence is TFLAQLIWLALAFGLLYYLMS.

It belongs to the ATPase B chain family. As to quaternary structure, F-type ATPases have 2 components, F(1) - the catalytic core - and F(0) - the membrane proton channel. F(1) has five subunits: alpha(3), beta(3), gamma(1), delta(1), epsilon(1). F(0) has three main subunits: a(1), b(2) and c(10-14). The alpha and beta chains form an alternating ring which encloses part of the gamma chain. F(1) is attached to F(0) by a central stalk formed by the gamma and epsilon chains, while a peripheral stalk is formed by the delta and b chains.

Its subcellular location is the cell inner membrane. In terms of biological role, f(1)F(0) ATP synthase produces ATP from ADP in the presence of a proton or sodium gradient. F-type ATPases consist of two structural domains, F(1) containing the extramembraneous catalytic core and F(0) containing the membrane proton channel, linked together by a central stalk and a peripheral stalk. During catalysis, ATP synthesis in the catalytic domain of F(1) is coupled via a rotary mechanism of the central stalk subunits to proton translocation. Its function is as follows. Component of the F(0) channel, it forms part of the peripheral stalk, linking F(1) to F(0). The b'-subunit is a diverged and duplicated form of b found in plants and photosynthetic bacteria. The protein is ATP synthase subunit b 2 (atpF2) of Methylorubrum populi (strain ATCC BAA-705 / NCIMB 13946 / BJ001) (Methylobacterium populi).